Reading from the N-terminus, the 416-residue chain is Glutamyl-tRNA reductase (416 aa).

Residues 50 to 53, Ser109, 114 to 116, and Gln120 each bind substrate; these read TCNR and EPQ. Cys51 (nucleophile) is an active-site residue. 189–194 lines the NADP(+) pocket; it reads GAGEMI.

Belongs to the glutamyl-tRNA reductase family. In terms of assembly, homodimer.

The catalysed reaction is (S)-4-amino-5-oxopentanoate + tRNA(Glu) + NADP(+) = L-glutamyl-tRNA(Glu) + NADPH + H(+). It participates in porphyrin-containing compound metabolism; protoporphyrin-IX biosynthesis; 5-aminolevulinate from L-glutamyl-tRNA(Glu): step 1/2. Functionally, catalyzes the NADPH-dependent reduction of glutamyl-tRNA(Glu) to glutamate 1-semialdehyde (GSA). This Ruthia magnifica subsp. Calyptogena magnifica protein is Glutamyl-tRNA reductase.